The following is a 455-amino-acid chain: RQC trigger complex subunit RQT4 homolog (455 aa).

Disordered regions lie at residues 64-98 (STHS…SHPS) and 118-148 (PASR…GVMT). 2 stretches are compositionally biased toward polar residues: residues 65–98 (THSG…SHPS) and 119–130 (ASRNKSQSNNIS). Serine 70 carries the phosphoserine modification. Serine 380 is subject to Phosphoserine.

As to quaternary structure, component of the RQT (ribosome quality control trigger) complex.

The protein resides in the cytoplasm. The protein localises to the cytosol. Its function is as follows. Probably functions as part of the RQC trigger (RQT) complex that activates the ribosome quality control (RQC) pathway, a pathway that degrades nascent peptide chains during problematic translation. This chain is RQC trigger complex subunit RQT4 homolog, found in Schizosaccharomyces pombe (strain 972 / ATCC 24843) (Fission yeast).